Consider the following 117-residue polypeptide: Non-specific lipid-transfer protein 2 (117 aa).

A signal peptide spans 1–25; the sequence is MAGLMKLACLVLACMIVAGPITSNA. 4 cysteine pairs are disulfide-bonded: cysteine 29–cysteine 76, cysteine 39–cysteine 53, cysteine 54–cysteine 99, and cysteine 74–cysteine 113.

Belongs to the plant LTP family.

In terms of biological role, plant non-specific lipid-transfer proteins transfer phospholipids as well as galactolipids across membranes. May play a role in wax or cutin deposition in the cell walls of expanding epidermal cells and certain secretory tissues. This is Non-specific lipid-transfer protein 2 (LTP2) from Brassica napus (Rape).